Here is a 205-residue protein sequence, read N- to C-terminus: NADH-ubiquinone oxidoreductase chain 6 (205 aa).

Transmembrane regions (helical) follow at residues 48–68 (FFAM…FLFV), 86–106 (YLPV…FILD), and 150–170 (VWFL…IVLT).

It belongs to the complex I subunit 6 family. Complex I is composed of about 45 different subunits.

The protein localises to the mitochondrion membrane. The enzyme catalyses a ubiquinone + NADH + 5 H(+)(in) = a ubiquinol + NAD(+) + 4 H(+)(out). Core subunit of the mitochondrial membrane respiratory chain NADH dehydrogenase (Complex I) that is believed to belong to the minimal assembly required for catalysis. Complex I functions in the transfer of electrons from NADH to the respiratory chain. The immediate electron acceptor for the enzyme is believed to be ubiquinone. This is NADH-ubiquinone oxidoreductase chain 6 (ND6) from Brassica campestris (Field mustard).